We begin with the raw amino-acid sequence, 206 residues long: Probable peptidyl-tRNA hydrolase (206 aa).

Histidine 48 acts as the Proton acceptor in catalysis. Positions 83, 85, and 137 each coordinate tRNA.

Belongs to the PTH family.

The protein resides in the mitochondrion. It carries out the reaction an N-acyl-L-alpha-aminoacyl-tRNA + H2O = an N-acyl-L-amino acid + a tRNA + H(+). Its function is as follows. Peptidyl-tRNA hydrolase involved in the recycling of tRNA-Lys from diacetyl-lysyl-tRNA-Lys and is important for mitochondrial function. The protein is Probable peptidyl-tRNA hydrolase (pth1) of Schizosaccharomyces pombe (strain 972 / ATCC 24843) (Fission yeast).